Here is a 356-residue protein sequence, read N- to C-terminus: Inositol monophosphatase 3 (356 aa).

The chain crosses the membrane as a helical span at residues 11 to 31; that stretch reads LGIGVFCLLGLGVLYHVYSGF. Residues Glu127, Asp167, Leu169, Asp170, and Asp293 each coordinate Mg(2+). A substrate-binding site is contributed by Glu127. Residues 169-172 and Asp293 contribute to the substrate site; that span reads LDAT.

The protein belongs to the inositol monophosphatase superfamily. Mg(2+) serves as cofactor.

It localises to the membrane. It catalyses the reaction a myo-inositol phosphate + H2O = myo-inositol + phosphate. It functions in the pathway polyol metabolism; myo-inositol biosynthesis; myo-inositol from D-glucose 6-phosphate: step 2/2. The chain is Inositol monophosphatase 3 (bpnt2) from Xenopus tropicalis (Western clawed frog).